The chain runs to 277 residues: tRNA uridine(34) hydroxylase (277 aa).

Positions 126–221 (SSPDVHVIDT…YLETMRGDDS (96 aa)) constitute a Rhodanese domain. C181 acts as the Cysteine persulfide intermediate in catalysis.

It belongs to the TrhO family.

The catalysed reaction is uridine(34) in tRNA + AH2 + O2 = 5-hydroxyuridine(34) in tRNA + A + H2O. Its function is as follows. Catalyzes oxygen-dependent 5-hydroxyuridine (ho5U) modification at position 34 in tRNAs. The polypeptide is tRNA uridine(34) hydroxylase (Anaplasma marginale (strain St. Maries)).